A 711-amino-acid chain; its full sequence is DNA topoisomerase 3 (711 aa).

The 134-residue stretch at 2 to 135 folds into the Toprim domain; it reads KSLILAEKPS…IRRLWISSVT (134 aa). The Mg(2+) site is built by Glu8 and Asp104. Positions 152–580 constitute a Topo IA-type catalytic domain; the sequence is YNDLYYAALA…EMKDFTKDVV (429 aa). An interaction with DNA region spans residues 186-191; that stretch reads SLGRVQ. Tyr305 (O-(5'-phospho-DNA)-tyrosine intermediate) is an active-site residue. The disordered stretch occupies residues 691–711; sequence MNKNEGLDNNPFKDALKNLNL.

It belongs to the type IA topoisomerase family. The cofactor is Mg(2+).

It catalyses the reaction ATP-independent breakage of single-stranded DNA, followed by passage and rejoining.. Releases the supercoiling and torsional tension of DNA, which is introduced during the DNA replication and transcription, by transiently cleaving and rejoining one strand of the DNA duplex. Introduces a single-strand break via transesterification at a target site in duplex DNA. The scissile phosphodiester is attacked by the catalytic tyrosine of the enzyme, resulting in the formation of a DNA-(5'-phosphotyrosyl)-enzyme intermediate and the expulsion of a 3'-OH DNA strand. The free DNA strand then undergoes passage around the unbroken strand, thus removing DNA supercoils. Finally, in the religation step, the DNA 3'-OH attacks the covalent intermediate to expel the active-site tyrosine and restore the DNA phosphodiester backbone. The chain is DNA topoisomerase 3 from Staphylococcus aureus (strain NCTC 8325 / PS 47).